We begin with the raw amino-acid sequence, 256 residues long: MYPSRNKRGSYFNQRRQYSRNHVWKRPTAAKRHDWKRRPSNTSKPNDEPKMSAQRIHENQYGPEFVMAQNSAISSFISYPDLGRSEPNRSRSYIRLKQLRFKGTVKIEQVPLAMNMDGSTPKVEGVFSLVIVVDRKPHLGPSGCLHTFDELFGARIHSHGNLSVTPALKDRYYIRHVCKRVLSVEKDTLMVDVEGSIPLSNRRINCWATFKDVDRESCKGVYDNISKNALLVYYCWMSDTPAKASTFVSFDLDYIG.

The disordered stretch occupies residues 1-53 (MYPSRNKRGSYFNQRRQYSRNHVWKRPTAAKRHDWKRRPSNTSKPNDEPKMSA). A compositionally biased stretch (basic residues) spans 17–39 (QYSRNHVWKRPTAAKRHDWKRRP). A Bipartite nuclear localization signal motif is present at residues 21–42 (NHVWKRPTAAKRHDWKRRPSNT). The Nuclear localization signal motif lies at 81–96 (DLGRSEPNRSRSYIRL). An interaction with Arabidopsis thaliana NSI protein region spans residues 150 to 187 (ELFGARIHSHGNLSVTPALKDRYYIRHVCKRVLSVEKD).

The protein belongs to the begomovirus nuclear shuttle protein family. As to quaternary structure, binds to single-stranded and double-stranded viral DNA. Interacts with the host nuclear shuttle interacting (NSI) protein. This interaction may allow NSP to recruit NSI monomers to the viral genome and thus regulate nuclear export of viral genome by NSP.

The protein resides in the host nucleus. It localises to the host cytoplasm. Its subcellular location is the host cell membrane. Functionally, binds to the genomic viral ssDNA, shuttles it into and out of the cell nucleus. Begomoviruses use 2 proteins to transport their DNA from cell to cell. The nuclear shuttle protein (NSP) shuttles it between nucleus and cytoplasm and the movement protein (MP) probably transports the DNA-NSP complex to the cell periphery and facilitates movement across the cell wall. The chain is Nuclear shuttle protein from Abutilon mosaic virus (isolate West India) (AbMV).